A 689-amino-acid chain; its full sequence is DNA ligase (689 aa).

NAD(+)-binding positions include 40 to 44, 89 to 90, and glutamate 121; these read DSEYD and SL. Lysine 123 serves as the catalytic N6-AMP-lysine intermediate. NAD(+) contacts are provided by arginine 144, glutamate 179, lysine 295, and lysine 319. Zn(2+) contacts are provided by cysteine 413, cysteine 416, cysteine 431, and cysteine 437. A BRCT domain is found at 610–689; it reads REQSSLTDKI…EEWLTLIKNV (80 aa).

It belongs to the NAD-dependent DNA ligase family. LigA subfamily. Requires Mg(2+) as cofactor. The cofactor is Mn(2+).

It carries out the reaction NAD(+) + (deoxyribonucleotide)n-3'-hydroxyl + 5'-phospho-(deoxyribonucleotide)m = (deoxyribonucleotide)n+m + AMP + beta-nicotinamide D-nucleotide.. DNA ligase that catalyzes the formation of phosphodiester linkages between 5'-phosphoryl and 3'-hydroxyl groups in double-stranded DNA using NAD as a coenzyme and as the energy source for the reaction. It is essential for DNA replication and repair of damaged DNA. The chain is DNA ligase from Rickettsia rickettsii (strain Iowa).